A 387-amino-acid polypeptide reads, in one-letter code: Homoserine O-succinyltransferase (387 aa).

In terms of domain architecture, AB hydrolase-1 spans Asn45 to Leu354. Catalysis depends on Ser151, which acts as the Nucleophile. Arg221 is a binding site for substrate. Active-site residues include Asp317 and His350. Asp351 contributes to the substrate binding site.

The protein belongs to the AB hydrolase superfamily. MetX family. As to quaternary structure, homodimer.

Its subcellular location is the cytoplasm. The enzyme catalyses L-homoserine + succinyl-CoA = O-succinyl-L-homoserine + CoA. Its pathway is amino-acid biosynthesis; L-methionine biosynthesis via de novo pathway; O-succinyl-L-homoserine from L-homoserine: step 1/1. Transfers a succinyl group from succinyl-CoA to L-homoserine, forming succinyl-L-homoserine. In Methylibium petroleiphilum (strain ATCC BAA-1232 / LMG 22953 / PM1), this protein is Homoserine O-succinyltransferase.